The sequence spans 225 residues: Deoxyribose-phosphate aldolase (225 aa).

Asp-94 acts as the Proton donor/acceptor in catalysis. Lys-158 functions as the Schiff-base intermediate with acetaldehyde in the catalytic mechanism. Lys-187 (proton donor/acceptor) is an active-site residue.

This sequence belongs to the DeoC/FbaB aldolase family. DeoC type 1 subfamily.

Its subcellular location is the cytoplasm. The catalysed reaction is 2-deoxy-D-ribose 5-phosphate = D-glyceraldehyde 3-phosphate + acetaldehyde. Its pathway is carbohydrate degradation; 2-deoxy-D-ribose 1-phosphate degradation; D-glyceraldehyde 3-phosphate and acetaldehyde from 2-deoxy-alpha-D-ribose 1-phosphate: step 2/2. Functionally, catalyzes a reversible aldol reaction between acetaldehyde and D-glyceraldehyde 3-phosphate to generate 2-deoxy-D-ribose 5-phosphate. The polypeptide is Deoxyribose-phosphate aldolase (Thermococcus gammatolerans (strain DSM 15229 / JCM 11827 / EJ3)).